Here is a 534-residue protein sequence, read N- to C-terminus: Cyclin-L1 (534 aa).

Cyclin-like regions lie at residues 94–196 (ELIQ…RVLK) and 209–293 (KIIV…KILQ). A disordered region spans residues 327–534 (LPEGAPVLDN…DHPGHSRHRR (208 aa)). Residues 389–399 (KGRESRSRSGS) show a composition bias toward basic and acidic residues. Composition is skewed to low complexity over residues 400-412 (RDQS…SRSA) and 437-453 (RSGS…TYKS). The segment at 400–436 (RDQSYSRSPSRSASPKHRKSESYSTSSGSKSHSRSRS) is RS. The segment covering 468-485 (SAHKARKSRSRSSSRSRS) has biased composition (basic residues). A compositionally biased stretch (basic and acidic residues) spans 486-495 (RSRERSDHSG). Basic residues predominate over residues 496-511 (KYKKKSHYYRNHRHER). Basic and acidic residues predominate over residues 512-528 (SRSYERASHRYDRDHPG).

The protein belongs to the cyclin family. Cyclin L subfamily.

It localises to the nucleus speckle. Its subcellular location is the nucleus. The protein localises to the nucleoplasm. Functionally, involved in pre-mRNA splicing. The protein is Cyclin-L1 (CCNL1) of Gallus gallus (Chicken).